We begin with the raw amino-acid sequence, 460 residues long: Bifunctional protein GlmU (460 aa).

The interval 1 to 235 is pyrophosphorylase; sequence MALSAAIVLA…PLTVEGVNDR (235 aa). Residues 9 to 12, lysine 23, glutamine 76, and 81 to 82 contribute to the UDP-N-acetyl-alpha-D-glucosamine site; these read LAAG and GT. A Mg(2+)-binding site is contributed by aspartate 109. Positions 146, 161, 176, and 233 each coordinate UDP-N-acetyl-alpha-D-glucosamine. Residue asparagine 233 participates in Mg(2+) binding. The interval 236–256 is linker; that stretch reads VQLAALSKTYNRRVCERWMRN. The segment at 257 to 460 is N-acetyltransferase; that stretch reads GVTILDPETT…VEGWKPAWER (204 aa). UDP-N-acetyl-alpha-D-glucosamine contacts are provided by arginine 338 and lysine 356. Histidine 368 functions as the Proton acceptor in the catalytic mechanism. Tyrosine 371 and asparagine 382 together coordinate UDP-N-acetyl-alpha-D-glucosamine. Acetyl-CoA is bound by residues 391-392 and alanine 428; that span reads NY.

It in the N-terminal section; belongs to the N-acetylglucosamine-1-phosphate uridyltransferase family. The protein in the C-terminal section; belongs to the transferase hexapeptide repeat family. Homotrimer. It depends on Mg(2+) as a cofactor.

It is found in the cytoplasm. It catalyses the reaction alpha-D-glucosamine 1-phosphate + acetyl-CoA = N-acetyl-alpha-D-glucosamine 1-phosphate + CoA + H(+). It carries out the reaction N-acetyl-alpha-D-glucosamine 1-phosphate + UTP + H(+) = UDP-N-acetyl-alpha-D-glucosamine + diphosphate. Its pathway is nucleotide-sugar biosynthesis; UDP-N-acetyl-alpha-D-glucosamine biosynthesis; N-acetyl-alpha-D-glucosamine 1-phosphate from alpha-D-glucosamine 6-phosphate (route II): step 2/2. The protein operates within nucleotide-sugar biosynthesis; UDP-N-acetyl-alpha-D-glucosamine biosynthesis; UDP-N-acetyl-alpha-D-glucosamine from N-acetyl-alpha-D-glucosamine 1-phosphate: step 1/1. It participates in bacterial outer membrane biogenesis; LPS lipid A biosynthesis. Its function is as follows. Catalyzes the last two sequential reactions in the de novo biosynthetic pathway for UDP-N-acetylglucosamine (UDP-GlcNAc). The C-terminal domain catalyzes the transfer of acetyl group from acetyl coenzyme A to glucosamine-1-phosphate (GlcN-1-P) to produce N-acetylglucosamine-1-phosphate (GlcNAc-1-P), which is converted into UDP-GlcNAc by the transfer of uridine 5-monophosphate (from uridine 5-triphosphate), a reaction catalyzed by the N-terminal domain. The sequence is that of Bifunctional protein GlmU from Bifidobacterium longum subsp. infantis (strain ATCC 15697 / DSM 20088 / JCM 1222 / NCTC 11817 / S12).